A 184-amino-acid polypeptide reads, in one-letter code: Large ribosomal subunit protein uL5 (184 aa).

It belongs to the universal ribosomal protein uL5 family. Part of the 50S ribosomal subunit; part of the 5S rRNA/L5/L18/L25 subcomplex. Contacts the 5S rRNA and the P site tRNA. Forms a bridge to the 30S subunit in the 70S ribosome.

In terms of biological role, this is one of the proteins that bind and probably mediate the attachment of the 5S RNA into the large ribosomal subunit, where it forms part of the central protuberance. In the 70S ribosome it contacts protein S13 of the 30S subunit (bridge B1b), connecting the 2 subunits; this bridge is implicated in subunit movement. Contacts the P site tRNA; the 5S rRNA and some of its associated proteins might help stabilize positioning of ribosome-bound tRNAs. This is Large ribosomal subunit protein uL5 from Syntrophotalea carbinolica (strain DSM 2380 / NBRC 103641 / GraBd1) (Pelobacter carbinolicus).